The chain runs to 92 residues: UPF0473 protein BC_4380 (92 aa).

It belongs to the UPF0473 family.

In Bacillus cereus (strain ATCC 14579 / DSM 31 / CCUG 7414 / JCM 2152 / NBRC 15305 / NCIMB 9373 / NCTC 2599 / NRRL B-3711), this protein is UPF0473 protein BC_4380.